The following is a 303-amino-acid chain: E3 ubiquitin-protein ligase SINA-like 3 (303 aa).

The segment at 1 to 30 is disordered; sequence MENITNNSERSLDRPKRQRPVSMENVGGTA. The RING-type zinc-finger motif lies at 49 to 85; sequence CPICYHKLGAPIYQCDNGHIACSSCCKKVKYKCPYCS. The interval 99–286 is SBD; sequence IVEAVVVSCP…MSIPYYLLDE (188 aa). The SIAH-type zinc-finger motif lies at 102-162; it reads AVVVSCPNAK…LYRHYHAEHK (61 aa). Residues Cys-107, Cys-114, His-128, Cys-132, Cys-139, Cys-144, His-156, and His-161 each contribute to the Zn(2+) site.

This sequence belongs to the SINA (Seven in absentia) family.

The enzyme catalyses S-ubiquitinyl-[E2 ubiquitin-conjugating enzyme]-L-cysteine + [acceptor protein]-L-lysine = [E2 ubiquitin-conjugating enzyme]-L-cysteine + N(6)-ubiquitinyl-[acceptor protein]-L-lysine.. It participates in protein modification; protein ubiquitination. Its function is as follows. E3 ubiquitin-protein ligase that mediates ubiquitination and subsequent proteasomal degradation of target proteins. E3 ubiquitin ligases accept ubiquitin from an E2 ubiquitin-conjugating enzyme in the form of a thioester and then directly transfers the ubiquitin to targeted substrates. It probably triggers the ubiquitin-mediated degradation of different substrates. The polypeptide is E3 ubiquitin-protein ligase SINA-like 3 (Arabidopsis thaliana (Mouse-ear cress)).